The chain runs to 273 residues: Rhamnulose-1-phosphate aldolase (273 aa).

The active site involves Glu-117. 3 residues coordinate Zn(2+): His-140, His-142, and His-211.

Belongs to the aldolase class II family. RhaD subfamily. Requires Zn(2+) as cofactor.

It localises to the cytoplasm. The catalysed reaction is L-rhamnulose 1-phosphate = (S)-lactaldehyde + dihydroxyacetone phosphate. The protein operates within carbohydrate degradation; L-rhamnose degradation; glycerone phosphate from L-rhamnose: step 3/3. Its function is as follows. Catalyzes the reversible cleavage of L-rhamnulose-1-phosphate to dihydroxyacetone phosphate (DHAP) and L-lactaldehyde. The polypeptide is Rhamnulose-1-phosphate aldolase (Listeria innocua serovar 6a (strain ATCC BAA-680 / CLIP 11262)).